The sequence spans 307 residues: DDRGK domain-containing protein 1 (307 aa).

Over 1–2 the chain is Lumenal; that stretch reads MD. The chain crosses the membrane as a helical span at residues 3-23; sequence LILLVGIATALLLILITLYFL. Residues 24–307 are Cytoplasmic-facing; the sequence is QSKNAKTETK…TPVAAGESSA (284 aa). The disordered stretch occupies residues 31–175; the sequence is ETKAAAQPQR…EADRLAKEER (145 aa). A compositionally biased stretch (low complexity) spans 52-83; that stretch reads RRAQIARNQRNRLRQNQNAPAVAAAAAPAAAV. Basic and acidic residues predominate over residues 107–175; sequence LDEKMGAKKR…EADRLAKEER (69 aa).

This sequence belongs to the DDRGK1 family. In terms of assembly, interacts with Atg9; the interaction is transient.

The protein resides in the endoplasmic reticulum membrane. In terms of biological role, substrate adapter for ufmylation, the covalent attachment of the ubiquitin-like modifier UFM1 to substrate proteins. Required for ufmylation of Atg9; protects the nervous system during aging, possibly by stabilizing Atg9 and supporting its function. This chain is DDRGK domain-containing protein 1, found in Drosophila virilis (Fruit fly).